Reading from the N-terminus, the 1089-residue chain is WD repeat-containing protein on Y chromosome (1089 aa).

WD repeat units follow at residues 155 to 199 (EEVA…IRTA), 207 to 249 (PHAV…RGPF), 329 to 368 (RIPL…EPSA), 372 to 411 (GHNG…LLQT), 462 to 501 (THAA…RKII), 514 to 553 (TIDI…VIRN), and 601 to 641 (FHTD…RRYS). Residues 661–684 (KRSKRWASRAPHSGSHMMSHTGSH) are disordered. Residues 672–684 (HSGSHMMSHTGSH) are compositionally biased toward low complexity. WD repeat units follow at residues 767–806 (KTGD…IPEA) and 850–889 (GHLK…LGTL). The tract at residues 1049–1089 (LNIKLPSRRRSDRTNDPRNMRTAKTRGDMGLGHRSSHTSQN) is disordered.

The protein is WD repeat-containing protein on Y chromosome of Drosophila willistoni (Fruit fly).